Consider the following 427-residue polypeptide: Lactadherin (427 aa).

The N-terminal stretch at 1 to 22 is a signal peptide; it reads MQFSRVLAALCGVLLCASGLFA. 2 consecutive EGF-like domains span residues 24–61 and 64–108; these read SGDF…LVCN and EKGP…IHCE. Intrachain disulfides connect Cys28/Cys39, Cys33/Cys49, and Cys51/Cys60. Asn61 is a glycosylation site (N-linked (GlcNAc...) asparagine). Intrachain disulfides connect Cys68-Cys79, Cys73-Cys96, Cys98-Cys107, Cys111-Cys267, Cys254-Cys258, and Cys272-Cys427. A Cell attachment site motif is present at residues 87–89; it reads RGD. F5/8 type C domains lie at 111 to 267 and 272 to 427; these read CSTK…LLGC and CSEP…LLGC. Residue Asn230 is glycosylated (N-linked (GlcNAc...) asparagine). Asn280 and Asn390 each carry an N-linked (GlcNAc...) asparagine glycan.

In terms of tissue distribution, spleen, lung, heart, brain and muscle.

Its subcellular location is the membrane. The protein localises to the secreted. It is found in the cytoplasmic vesicle. It localises to the secretory vesicle. The protein resides in the acrosome membrane. Contributes to phagocytic removal of apoptotic cells in many tissues. Plays an important role in the maintenance of intestinal epithelial homeostasis and the promotion of mucosal healing. Promotes VEGF-dependent neovascularization. Specific ligand for the alpha-v/beta-3 and alpha-v/beta-5 receptors. Also binds to phosphatidylserine-enriched cell surfaces in a receptor-independent manner. Zona pellucida-binding protein which may play a role in gamete interaction. Appears to participate in the O-acetylation of GD3 ganglioside sialic acid. In Rattus norvegicus (Rat), this protein is Lactadherin (Mfge8).